The chain runs to 337 residues: tRNA N6-adenosine threonylcarbamoyltransferase (337 aa).

Residues His-114 and His-118 each coordinate Fe cation. Substrate contacts are provided by residues 136–140, Asp-169, Gly-182, Asp-186, and Asn-275; that span reads LVSGG. Asp-301 contacts Fe cation.

This sequence belongs to the KAE1 / TsaD family. It depends on Fe(2+) as a cofactor.

It localises to the cytoplasm. The enzyme catalyses L-threonylcarbamoyladenylate + adenosine(37) in tRNA = N(6)-L-threonylcarbamoyladenosine(37) in tRNA + AMP + H(+). Its function is as follows. Required for the formation of a threonylcarbamoyl group on adenosine at position 37 (t(6)A37) in tRNAs that read codons beginning with adenine. Is involved in the transfer of the threonylcarbamoyl moiety of threonylcarbamoyl-AMP (TC-AMP) to the N6 group of A37, together with TsaE and TsaB. TsaD likely plays a direct catalytic role in this reaction. The sequence is that of tRNA N6-adenosine threonylcarbamoyltransferase from Streptococcus thermophilus (strain CNRZ 1066).